The sequence spans 634 residues: Chaperone protein HtpG (634 aa).

An a; substrate-binding region spans residues 1-339 (MAQETMSFQA…SADLPLNVSR (339 aa)). The b stretch occupies residues 340–559 (EILQESRDVK…DGEMSGYLQR (220 aa)). Residues 560–634 (MLKAAGQQAP…ALLLARANEA (75 aa)) form a c region.

It belongs to the heat shock protein 90 family. In terms of assembly, homodimer.

It is found in the cytoplasm. Functionally, molecular chaperone. Has ATPase activity. This is Chaperone protein HtpG from Paraburkholderia xenovorans (strain LB400).